The following is a 320-amino-acid chain: Aspartate carbamoyltransferase catalytic subunit (320 aa).

Residues Arg-70 and Thr-71 each contribute to the carbamoyl phosphate site. Residue Lys-98 coordinates L-aspartate. Carbamoyl phosphate-binding residues include Arg-120, His-149, and Gln-152. Residues Arg-182 and Arg-237 each coordinate L-aspartate. Positions 278 and 279 each coordinate carbamoyl phosphate.

This sequence belongs to the aspartate/ornithine carbamoyltransferase superfamily. ATCase family. In terms of assembly, heterododecamer (2C3:3R2) of six catalytic PyrB chains organized as two trimers (C3), and six regulatory PyrI chains organized as three dimers (R2).

The catalysed reaction is carbamoyl phosphate + L-aspartate = N-carbamoyl-L-aspartate + phosphate + H(+). The protein operates within pyrimidine metabolism; UMP biosynthesis via de novo pathway; (S)-dihydroorotate from bicarbonate: step 2/3. In terms of biological role, catalyzes the condensation of carbamoyl phosphate and aspartate to form carbamoyl aspartate and inorganic phosphate, the committed step in the de novo pyrimidine nucleotide biosynthesis pathway. The sequence is that of Aspartate carbamoyltransferase catalytic subunit from Ruthia magnifica subsp. Calyptogena magnifica.